We begin with the raw amino-acid sequence, 437 residues long: Glutamyl-tRNA reductase (437 aa).

Substrate contacts are provided by residues 46–49 (TCNR), serine 97, 102–104 (EEQ), and glutamine 108. Cysteine 47 functions as the Nucleophile in the catalytic mechanism. 177 to 182 (GAGEMG) is an NADP(+) binding site. Residues 410 to 437 (NGRVSEGKDAKVEEGKPEVDVQRSKAES) form a disordered region. Over residues 414-437 (SEGKDAKVEEGKPEVDVQRSKAES) the composition is skewed to basic and acidic residues.

It belongs to the glutamyl-tRNA reductase family. In terms of assembly, homodimer.

The catalysed reaction is (S)-4-amino-5-oxopentanoate + tRNA(Glu) + NADP(+) = L-glutamyl-tRNA(Glu) + NADPH + H(+). Its pathway is porphyrin-containing compound metabolism; protoporphyrin-IX biosynthesis; 5-aminolevulinate from L-glutamyl-tRNA(Glu): step 1/2. Catalyzes the NADPH-dependent reduction of glutamyl-tRNA(Glu) to glutamate 1-semialdehyde (GSA). This Archaeoglobus fulgidus (strain ATCC 49558 / DSM 4304 / JCM 9628 / NBRC 100126 / VC-16) protein is Glutamyl-tRNA reductase.